A 498-amino-acid chain; its full sequence is ATP synthase subunit beta, chloroplastic (498 aa).

172–179 (GGAGVGKT) serves as a coordination point for ATP.

Belongs to the ATPase alpha/beta chains family. F-type ATPases have 2 components, CF(1) - the catalytic core - and CF(0) - the membrane proton channel. CF(1) has five subunits: alpha(3), beta(3), gamma(1), delta(1), epsilon(1). CF(0) has four main subunits: a(1), b(1), b'(1) and c(9-12).

It localises to the plastid. The protein localises to the chloroplast thylakoid membrane. It catalyses the reaction ATP + H2O + 4 H(+)(in) = ADP + phosphate + 5 H(+)(out). Its function is as follows. Produces ATP from ADP in the presence of a proton gradient across the membrane. The catalytic sites are hosted primarily by the beta subunits. The protein is ATP synthase subunit beta, chloroplastic of Idiospermum australiense (Ribbonwood tree).